The sequence spans 181 residues: S-fimbrial protein subunit SfaA (181 aa).

An N-terminal signal peptide occupies residues 1-24 (MKLKFISMAVFSALTLGVATNASA). A disulfide bridge links C44 with C84.

Belongs to the fimbrial protein family.

It is found in the fimbrium. Fimbriae (also called pili), polar filaments radiating from the surface of the bacterium to a length of 0.5-1.5 micrometers and numbering 100-300 per cell, enable bacteria to colonize the epithelium of specific host organs. Its function is as follows. The major fimbrial subunit. Interacts with alpha-sialic acid-(2-3)-beta-Gal containing receptors. It belongs to the group of Mrh (Mannose-resistant hemagglutination) fimbrial proteins. The protein is S-fimbrial protein subunit SfaA (sfaA) of Escherichia coli O6:K15:H31 (strain 536 / UPEC).